A 1190-amino-acid chain; its full sequence is DNA-directed RNA polymerase subunit beta (1190 aa).

A disordered region spans residues 1155 to 1190; the sequence is ENFDDDDDHAPDAIMVDVKPAEREEAGEEKDAVTKE. Basic and acidic residues predominate over residues 1173–1190; sequence KPAEREEAGEEKDAVTKE.

It belongs to the RNA polymerase beta chain family. The RNAP catalytic core consists of 2 alpha, 1 beta, 1 beta' and 1 omega subunit. When a sigma factor is associated with the core the holoenzyme is formed, which can initiate transcription.

It carries out the reaction RNA(n) + a ribonucleoside 5'-triphosphate = RNA(n+1) + diphosphate. In terms of biological role, DNA-dependent RNA polymerase catalyzes the transcription of DNA into RNA using the four ribonucleoside triphosphates as substrates. This chain is DNA-directed RNA polymerase subunit beta, found in Geobacillus kaustophilus (strain HTA426).